Consider the following 90-residue polypeptide: Large ribosomal subunit protein bL27 (90 aa).

The span at M1–G13 shows a compositional bias: low complexity. The disordered stretch occupies residues M1 to R20.

Belongs to the bacterial ribosomal protein bL27 family.

The chain is Large ribosomal subunit protein bL27 from Anaplasma marginale (strain Florida).